Consider the following 968-residue polypeptide: Putative pectinesterase/pectinesterase inhibitor 26 (968 aa).

The helical transmembrane segment at Ile-33 to Ile-53 threads the bilayer. The interval Leu-71–Ile-230 is pectinesterase inhibitor 26 A. Residues Asn-101, Asn-158, Asn-219, Asn-295, Asn-352, Asn-400, Asn-464, Asn-541, Asn-559, and Asn-603 are each glycosylated (N-linked (GlcNAc...) asparagine). The pectinesterase inhibitor 26 B stretch occupies residues Leu-265–Ile-430. Residues Pro-453–Ile-614 form a pectinesterase inhibitor 26 C region. Residues His-660–Asp-954 are pectinesterase 26. Position 735 (Thr-735) interacts with substrate. The N-linked (GlcNAc...) asparagine glycan is linked to Asn-737. Gln-765 contacts substrate. Asp-788 serves as the catalytic Proton donor; for pectinesterase activity. A disulfide bond links Cys-802 and Cys-822. Residue Asp-809 is the Nucleophile; for pectinesterase activity of the active site. Asn-863 carries an N-linked (GlcNAc...) asparagine glycan. The substrate site is built by Arg-872 and Trp-874. Asn-900 carries an N-linked (GlcNAc...) asparagine glycan.

It in the N-terminal section; belongs to the PMEI family. This sequence in the C-terminal section; belongs to the pectinesterase family. Expressed in flowers.

The protein resides in the membrane. The enzyme catalyses [(1-&gt;4)-alpha-D-galacturonosyl methyl ester](n) + n H2O = [(1-&gt;4)-alpha-D-galacturonosyl](n) + n methanol + n H(+). It functions in the pathway glycan metabolism; pectin degradation; 2-dehydro-3-deoxy-D-gluconate from pectin: step 1/5. In terms of biological role, acts in the modification of cell walls via demethylesterification of cell wall pectin. In Arabidopsis thaliana (Mouse-ear cress), this protein is Putative pectinesterase/pectinesterase inhibitor 26 (PME26).